The sequence spans 72 residues: MFTMKKPMLLLFFLGMISMSLCQDERGADEDDGGEMTEEEKRGAFGDLLKGVAKEAGLKLLNMAQCKLSGNC.

A signal peptide spans 1–22 (MFTMKKPMLLLFFLGMISMSLC). Positions 23-40 (QDERGADEDDGGEMTEEE) are cleaved as a propeptide — removed in mature form. Cysteine 66 and cysteine 72 are disulfide-bonded.

This sequence belongs to the frog skin active peptide (FSAP) family. Brevinin subfamily. Expressed by the skin glands.

It is found in the secreted. In terms of biological role, antimicrobial peptide. Active against a variety of Gram-negative and Gram-positive bacterial strains. Not active against fungi. Shows very weak hemolytic activity against human erythrocytes. This is Brevinin-2SN4 from Sylvirana spinulosa (Fine-spined frog).